Reading from the N-terminus, the 161-residue chain is Transcription elongation factor GreA (161 aa).

The stretch at 46–71 forms a coiled coil; that stretch reads AEYTAAKEKQSFLHGKLQELENNLAL.

The protein belongs to the GreA/GreB family.

In terms of biological role, necessary for efficient RNA polymerase transcription elongation past template-encoded arresting sites. The arresting sites in DNA have the property of trapping a certain fraction of elongating RNA polymerases that pass through, resulting in locked ternary complexes. Cleavage of the nascent transcript by cleavage factors such as GreA or GreB allows the resumption of elongation from the new 3'terminus. GreA releases sequences of 2 to 3 nucleotides. The sequence is that of Transcription elongation factor GreA from Syntrophus aciditrophicus (strain SB).